A 223-amino-acid polypeptide reads, in one-letter code: DNA mismatch repair protein MutH (223 aa).

It belongs to the MutH family.

Its subcellular location is the cytoplasm. In terms of biological role, sequence-specific endonuclease that cleaves unmethylated GATC sequences. It is involved in DNA mismatch repair. In Shewanella oneidensis (strain ATCC 700550 / JCM 31522 / CIP 106686 / LMG 19005 / NCIMB 14063 / MR-1), this protein is DNA mismatch repair protein MutH.